Reading from the N-terminus, the 127-residue chain is Fatty acid-binding protein, liver (127 aa).

Methionine 1 carries the post-translational modification N-acetylmethionine. At serine 11 the chain carries Phosphoserine. N6-succinyllysine is present on residues lysine 31 and lysine 36. Phosphoserine is present on serine 39. The residue at position 46 (lysine 46) is an N6-succinyllysine. The residue at position 51 (threonine 51) is a Phosphothreonine. At serine 56 the chain carries Phosphoserine. 3 positions are modified to N6-succinyllysine: lysine 57, lysine 78, and lysine 90. Serine 100 bears the Phosphoserine mark. Lysine 121 carries the post-translational modification N6-succinyllysine.

The protein belongs to the calycin superfamily. Fatty-acid binding protein (FABP) family. Monomer.

Its subcellular location is the cytoplasm. Functionally, plays a role in lipoprotein-mediated cholesterol uptake in hepatocytes. Binds cholesterol. Binds free fatty acids and their coenzyme A derivatives, bilirubin, and some other small molecules in the cytoplasm. May be involved in intracellular lipid transport. The chain is Fatty acid-binding protein, liver (FABP1) from Sus scrofa (Pig).